We begin with the raw amino-acid sequence, 383 residues long: Probable cell wall hydrolase LytN (383 aa).

The N-terminal stretch at 1–49 is a signal peptide; it reads MFVYYCKECFIMNKQQSKVRYSIRKVSIGILSISIGMFLALGMSNKAYA. In terms of domain architecture, LysM spans 175–219; that stretch reads QIYTVKKGDTLSAIALKYKTTVSNIQNTNNIANPNLIFIGQKLKV. The region spanning 241–378 is the Peptidase C51 domain; sequence NSSTLNYLKT…NYENDMIFIR (138 aa).

Its subcellular location is the secreted. In terms of biological role, probably involved in peptidoglycan hydrolysis. The sequence is that of Probable cell wall hydrolase LytN (lytN) from Staphylococcus aureus (strain MSSA476).